The primary structure comprises 391 residues: 1-deoxy-D-xylulose 5-phosphate reductoisomerase (391 aa).

NADPH is bound by residues Thr11, Gly12, Ser13, Ile14, and Asn126. Position 127 (Lys127) interacts with 1-deoxy-D-xylulose 5-phosphate. Glu128 lines the NADPH pocket. Asp152 contacts Mn(2+). 1-deoxy-D-xylulose 5-phosphate contacts are provided by Ser153, Glu154, Ser176, and His199. Glu154 contacts Mn(2+). NADPH is bound at residue Gly205. The 1-deoxy-D-xylulose 5-phosphate site is built by Ser212, Asn217, Lys218, and Glu221. Position 221 (Glu221) interacts with Mn(2+).

This sequence belongs to the DXR family. The cofactor is Mg(2+). Requires Mn(2+) as cofactor.

The enzyme catalyses 2-C-methyl-D-erythritol 4-phosphate + NADP(+) = 1-deoxy-D-xylulose 5-phosphate + NADPH + H(+). It functions in the pathway isoprenoid biosynthesis; isopentenyl diphosphate biosynthesis via DXP pathway; isopentenyl diphosphate from 1-deoxy-D-xylulose 5-phosphate: step 1/6. In terms of biological role, catalyzes the NADPH-dependent rearrangement and reduction of 1-deoxy-D-xylulose-5-phosphate (DXP) to 2-C-methyl-D-erythritol 4-phosphate (MEP). The protein is 1-deoxy-D-xylulose 5-phosphate reductoisomerase of Acidithiobacillus ferrooxidans (strain ATCC 53993 / BNL-5-31) (Leptospirillum ferrooxidans (ATCC 53993)).